A 423-amino-acid polypeptide reads, in one-letter code: Imidazolonepropionase (423 aa).

Residues His-78 and His-80 each contribute to the Fe(3+) site. Positions 78 and 80 each coordinate Zn(2+). 4-imidazolone-5-propanoate contacts are provided by Arg-87, Tyr-150, and His-183. Position 150 (Tyr-150) interacts with N-formimidoyl-L-glutamate. Fe(3+) is bound at residue His-247. A Zn(2+)-binding site is contributed by His-247. Glu-250 lines the 4-imidazolone-5-propanoate pocket. A Fe(3+)-binding site is contributed by Asp-322. Asp-322 is a binding site for Zn(2+). Positions 324 and 326 each coordinate N-formimidoyl-L-glutamate. Ser-327 provides a ligand contact to 4-imidazolone-5-propanoate.

The protein belongs to the metallo-dependent hydrolases superfamily. HutI family. Zn(2+) is required as a cofactor. Requires Fe(3+) as cofactor.

It localises to the cytoplasm. It carries out the reaction 4-imidazolone-5-propanoate + H2O = N-formimidoyl-L-glutamate. Its pathway is amino-acid degradation; L-histidine degradation into L-glutamate; N-formimidoyl-L-glutamate from L-histidine: step 3/3. Functionally, catalyzes the hydrolytic cleavage of the carbon-nitrogen bond in imidazolone-5-propanoate to yield N-formimidoyl-L-glutamate. It is the third step in the universal histidine degradation pathway. This chain is Imidazolonepropionase, found in Bacillus thuringiensis (strain Al Hakam).